Here is a 644-residue protein sequence, read N- to C-terminus: uncharacterized protein (644 aa).

254–261 (GKMGAGKS) is a binding site for ATP.

This is an uncharacterized protein from Bacillus anthracis.